The primary structure comprises 449 residues: MLEEHYYSRKTCGSGGGLSVQRTGYPQTDPPVFKAVNSFERAPLIVGDHVHSLPYWSRKITLECTPYPFTLRWEGGVHKDGIPDKVPHPSCDPGSELVSYTHSREVDCERFIGPVPSSFTDPKVTSAQWKFLEDMADMKALADLNKSLVNLPMLYKERRETLKMVGNRLGGLVRVAHAAQDRDLKRYFKARRKDRRKVAEEVANGHLELIFGWLPLIGELEGAIEYAELPDLDFIRCHGLHTLVLQSTPWDNSVDVRSYPNWERAAGTRITGSVRTRGVVESRASVRTALRFNLETSLAGDARRLGFEPISTTYDMIPLSFVVGWFSNFDKYVRTLAPLIGVTFETGSRNRRTTCELVGSTRFYPRTVSPPSGWFARWKDFPDGSLSEVSGLRRTDIRSVLSTLPDPDVRFHADVGLFEISAGISLLAQRYLKPLQRLLKRKSFFYGRT.

It belongs to the Leviviricetes maturation protein family. As to quaternary structure, interacts with the host pilus.

The protein resides in the virion. In terms of biological role, the maturation protein is required for the typical attachment of the phage to the side of the bacterial F-pili. Binds to sequences located toward each end of the genome, hence circularizing it. The RNA genome-maturation protein A complex is released from the capsid upon host receptor binding. Maturation protein A enters the cell along with the viral RNA. This chain is Maturation protein A, found in Pseudomonas aeruginosa (Bacteriophage PP7).